Here is a 172-residue protein sequence, read N- to C-terminus: Small ribosomal subunit protein uS5 (172 aa).

Positions 17–80 (LKEKMIAVNR…EEARRNMTKV (64 aa)) constitute an S5 DRBM domain.

Belongs to the universal ribosomal protein uS5 family. Part of the 30S ribosomal subunit. Contacts proteins S4 and S8.

In terms of biological role, with S4 and S12 plays an important role in translational accuracy. Its function is as follows. Located at the back of the 30S subunit body where it stabilizes the conformation of the head with respect to the body. The polypeptide is Small ribosomal subunit protein uS5 (Polaromonas sp. (strain JS666 / ATCC BAA-500)).